Here is a 343-residue protein sequence, read N- to C-terminus: ATP phosphoribosyltransferase regulatory subunit (343 aa).

The tract at residues 324–343 (RANGRAKRPARPRRSPPRPR) is disordered. Basic residues predominate over residues 327–343 (GRAKRPARPRRSPPRPR).

Belongs to the class-II aminoacyl-tRNA synthetase family. HisZ subfamily. As to quaternary structure, heteromultimer composed of HisG and HisZ subunits.

It is found in the cytoplasm. The protein operates within amino-acid biosynthesis; L-histidine biosynthesis; L-histidine from 5-phospho-alpha-D-ribose 1-diphosphate: step 1/9. In terms of biological role, required for the first step of histidine biosynthesis. May allow the feedback regulation of ATP phosphoribosyltransferase activity by histidine. This chain is ATP phosphoribosyltransferase regulatory subunit, found in Anaeromyxobacter sp. (strain Fw109-5).